The following is a 657-amino-acid chain: Heat shock protein hsp-6 (657 aa).

A mitochondrion-targeting transit peptide spans 1-27 (MLSARSFLSSARTIARSSLMSARSLSD). Positions 637 to 657 (KNSGGDAQEAKTAEEPKKEQN) are disordered. The span at 644 to 657 (QEAKTAEEPKKEQN) shows a compositional bias: basic and acidic residues.

It belongs to the heat shock protein 70 family.

The protein resides in the mitochondrion. This Caenorhabditis elegans protein is Heat shock protein hsp-6.